We begin with the raw amino-acid sequence, 321 residues long: Glutaminase (321 aa).

Residues Ser-69, Asn-120, Glu-165, Asn-172, Tyr-196, Tyr-248, and Val-266 each contribute to the substrate site.

It belongs to the glutaminase family. Homotetramer.

It catalyses the reaction L-glutamine + H2O = L-glutamate + NH4(+). This is Glutaminase from Bacteroides fragilis (strain ATCC 25285 / DSM 2151 / CCUG 4856 / JCM 11019 / LMG 10263 / NCTC 9343 / Onslow / VPI 2553 / EN-2).